The primary structure comprises 339 residues: MAKGLLMTYVLWALGGPVGLHHLYLGRDSHALLWMLTLGGGGLGWLWEFWKLPSFVAQANRVQSWKQRPEEERPPLSLLRFASQIVVGVYFGLVALVSLSSMDNFYIVGLPLAVGLGVLLVAAVGNQTSDFKNTLGAAFLTSPVFYGRPIAILPISLAASITAQKHRRYKASAGSETLSVRLYRVGLAYLAFTGPLAYSTMYNTAATINYVAETLGSFLSWFSFFPLLGRLVESVLLLPCRIWWLLVGGPGFNSSRFQEWEKLYEFVDSFQDEKLQLAHQVLGVPEGATNEEIHRSYRDLVKVWHPDHNRHQTEEAQRHFLEIQAAYEVLSQPKKPRAS.

Residues 4-50 (GLLMTYVLWALGGPVGLHHLYLGRDSHALLWMLTLGGGGLGWLWEFW) enclose the TM2 domain. Transmembrane regions (helical) follow at residues 5 to 25 (LLMT…HLYL), 30 to 50 (HALL…WEFW), 81 to 101 (FASQ…SLSS), 105 to 125 (FYIV…AAVG), 135 to 155 (LGAA…ILPI), 185 to 205 (VGLA…YNTA), and 218 to 238 (FLSW…VLLL). Positions 277–339 (LAHQVLGVPE…LSQPKKPRAS (63 aa)) constitute a J domain.

It localises to the membrane. Its function is as follows. May function as a co-chaperone. The chain is DnaJ homolog subfamily C member 22 (Dnajc22) from Mus musculus (Mouse).